Reading from the N-terminus, the 98-residue chain is Homeobox protein SMOX-4 (98 aa).

The segment at residues 37 to 96 (SFRNRTAFTDYQLICLEREFSHIQYLSRIDRIHLAQNLNLTEKQVKIWFQNRRVRWRKRN) is a DNA-binding region (homeobox).

It localises to the nucleus. The polypeptide is Homeobox protein SMOX-4 (SMOX-4) (Schistosoma mansoni (Blood fluke)).